The sequence spans 388 residues: Leucine aminopeptidase 1 (388 aa).

The N-terminal stretch at 1-19 (MKVLTAIALSAIAFTGAVA) is a signal peptide. Positions 20 to 88 (AVITQEAFLN…YPTLHSASYV (69 aa)) are excised as a propeptide. N-linked (GlcNAc...) asparagine glycans are attached at residues Asn106 and Asn180. Residues His188 and Asp207 each contribute to the Zn(2+) site. Residue Asn232 is glycosylated (N-linked (GlcNAc...) asparagine). Glu246 and Asp273 together coordinate Zn(2+). Residues Cys322 and Cys326 are joined by a disulfide bond. His355 contributes to the Zn(2+) binding site.

The protein belongs to the peptidase M28 family. M28E subfamily. As to quaternary structure, monomer. Zn(2+) is required as a cofactor.

The protein localises to the secreted. Functionally, extracellular aminopeptidase that allows assimilation of proteinaceous substrates and which contributes to pathogenicity. This Aspergillus fumigatus (strain CBS 144.89 / FGSC A1163 / CEA10) (Neosartorya fumigata) protein is Leucine aminopeptidase 1 (lap1).